The chain runs to 288 residues: Polyketide biosynthesis malonyl CoA-acyl carrier protein transacylase PksC (288 aa).

Active-site residues include Ser87 and His193.

Belongs to the FabD family.

Its subcellular location is the cytoplasm. The enzyme catalyses holo-[ACP] + malonyl-CoA = malonyl-[ACP] + CoA. It participates in antibiotic biosynthesis; bacillaene biosynthesis. Its function is as follows. Involved in some intermediate steps for the synthesis of the antibiotic polyketide bacillaene which is involved in secondary metabolism. It catalyzes the transfer of the malonyl-CoA group to the acyl-carrier-protein AcpK (Mal-AcpK). The sequence is that of Polyketide biosynthesis malonyl CoA-acyl carrier protein transacylase PksC (pksC) from Bacillus subtilis (strain 168).